We begin with the raw amino-acid sequence, 2169 residues long: Vitellogenin-A1 (2169 aa).

A signal peptide spans 1-46 (MATDGITSRFGFNERRRTHNRNSCRILEDKMLAKLLLLALAGLTAA). Asn-107 and Asn-125 each carry an N-linked (GlcNAc...) asparagine glycan. In terms of domain architecture, Vitellogenin spans 116–1008 (WMPNYEYVYN…SNDHRYPSGL (893 aa)). Residues Tyr-159 and Tyr-163 each carry the sulfotyrosine modification. 3 N-linked (GlcNAc...) asparagine glycosylation sites follow: Asn-360, Asn-391, and Asn-435. Disordered regions lie at residues 426–481 (DKKN…DKVE) and 514–570 (NDTS…SSSE). Positions 438–461 (SSSSSSSSSSSSSSSESSSSSSES) are enriched in low complexity. An N-linked (GlcNAc...) asparagine glycan is attached at Asn-514. Low complexity predominate over residues 517 to 531 (SSDSSSSDSSSSSSS). An N-linked (GlcNAc...) asparagine glycan is attached at Asn-538. Low complexity predominate over residues 541–570 (SSYSSSSSSSSSSSSSESSSYSSSSSSSSE). Asn-587, Asn-763, and Asn-781 each carry an N-linked (GlcNAc...) asparagine glycan. A sulfotyrosine mark is found at Tyr-1067, Tyr-1070, and Tyr-1074. Asn-1140, Asn-1233, and Asn-1336 each carry an N-linked (GlcNAc...) asparagine glycan. Sulfotyrosine occurs at positions 1563, 1564, and 1570. Residues Asn-1652 and Asn-1696 are each glycosylated (N-linked (GlcNAc...) asparagine). Sulfotyrosine occurs at positions 1737, 1806, 1809, 1822, 1824, and 1888. The region spanning 1770-1979 (PSCSFSNDYF…SYAITGQNCT (210 aa)) is the VWFD domain. Intrachain disulfides connect Cys-1772–Cys-1942 and Cys-1794–Cys-1978. N-linked (GlcNAc...) asparagine glycosylation is present at Asn-1977. A compositionally biased stretch (low complexity) spans 2026–2063 (EESSSSSSSSSSDSSSSSSSSESSSRSRSGSSSSSSSS). The interval 2026 to 2081 (EESSSSSSSSSSDSSSSSSSSESSSRSRSGSSSSSSSSEEQKEFHPHKQEHSMKEC) is disordered. A compositionally biased stretch (basic and acidic residues) spans 2064 to 2079 (EEQKEFHPHKQEHSMK).

Glycosylated, phosphorylated and sulfated. The large subunit is sulfated more extensively than the small one. In terms of tissue distribution, produced by the fat body, where it is cleaved in the rough endoplasmic reticulum or cis-Golgi before being secreted into hemolymph. It is then sequestered by a single class of receptor mediated endocytosis in the ovary.

In terms of biological role, precursor of the egg-yolk proteins that are sources of nutrients during embryonic development. May supply aromatic amino acids to the cuticle of rapidly developing embryos. In Aedes aegypti (Yellowfever mosquito), this protein is Vitellogenin-A1 (VGA1).